Consider the following 316-residue polypeptide: Lys-63-specific deubiquitinase BRCC36 (316 aa).

An N-acetylalanine modification is found at Ala2. Positions 12-179 (VHLESDAFLV…YTCFQSIQAQ (168 aa)) constitute an MPN domain. Zn(2+) is bound by residues His122, His124, and Asp135. The short motif at 122-135 (HSHPHITVWPSHVD) is the JAMM motif element. Ser258 bears the Phosphoserine mark.

Belongs to the peptidase M67A family. BRCC36 subfamily. In terms of assembly, component of the ARISC complex, at least composed of UIMC1/RAP80, ABRAXAS1, BRCC3/BRCC36, BABAM2 and BABAM1/NBA1. Component of the BRCA1-A complex, at least composed of BRCA1, BARD1, UIMC1/RAP80, ABRAXAS1, BRCC3/BRCC36, BABAM2 and BABAM1/NBA1. In the BRCA1-A complex, interacts directly with ABRAXAS1 and BABAM2. Component of the BRISC complex, at least composed of ABRAXAS2, BRCC3/BRCC36, BABAM2 and BABAM1/NBA1. Identified in a complex with SHMT2 and the other subunits of the BRISC complex. In the BRISC complex, interacts directly with ABRAXAS2. Identified in a complex with ABRAXAS2 and NUMA1. The BRISC complex interacts with the CSN complex. Component of the BRCA1/BRCA2 containing complex (BRCC), which also contains BRCA1, BRCA2, BARD1, BABAM2 and RAD51. BRCC is a ubiquitin E3 ligase complex that enhances cellular survival following DNA damage. Interacts with BRCA1. Binds polyubiquitin. Interacts with PWWP2B. Interacts with HDAC1; this interaction is enhanced in the presence of PWWP2B. Requires Zn(2+) as cofactor.

It localises to the nucleus. The protein localises to the cytoplasm. The protein resides in the cytoskeleton. Its subcellular location is the spindle pole. Functionally, metalloprotease that specifically cleaves 'Lys-63'-linked polyubiquitin chains. Does not have activity toward 'Lys-48'-linked polyubiquitin chains. Component of the BRCA1-A complex, a complex that specifically recognizes 'Lys-63'-linked ubiquitinated histones H2A and H2AX at DNA lesions sites, leading to target the BRCA1-BARD1 heterodimer to sites of DNA damage at double-strand breaks (DSBs). In the BRCA1-A complex, it specifically removes 'Lys-63'-linked ubiquitin on histones H2A and H2AX, antagonizing the RNF8-dependent ubiquitination at double-strand breaks (DSBs). Catalytic subunit of the BRISC complex, a multiprotein complex that specifically cleaves 'Lys-63'-linked ubiquitin in various substrates. Mediates the specific 'Lys-63'-specific deubiquitination associated with the COP9 signalosome complex (CSN), via the interaction of the BRISC complex with the CSN complex. The BRISC complex is required for normal mitotic spindle assembly and microtubule attachment to kinetochores via its role in deubiquitinating NUMA1. Plays a role in interferon signaling via its role in the deubiquitination of the interferon receptor IFNAR1; deubiquitination increases IFNAR1 activity by enhancing its stability and cell surface expression. Acts as a regulator of the NLRP3 inflammasome by mediating deubiquitination of NLRP3, leading to NLRP3 inflammasome assembly. Down-regulates the response to bacterial lipopolysaccharide (LPS) via its role in IFNAR1 deubiquitination. Deubiquitinates HDAC1 and PWWP2B leading to their stabilization. This is Lys-63-specific deubiquitinase BRCC36 (BRCC3) from Callithrix jacchus (White-tufted-ear marmoset).